We begin with the raw amino-acid sequence, 1155 residues long: DNA-directed RNA polymerase subunit beta (1155 aa).

Belongs to the RNA polymerase beta chain family. As to quaternary structure, the RNAP catalytic core consists of 2 alpha, 1 beta, 1 beta' and 1 omega subunit. When a sigma factor is associated with the core the holoenzyme is formed, which can initiate transcription.

The enzyme catalyses RNA(n) + a ribonucleoside 5'-triphosphate = RNA(n+1) + diphosphate. Functionally, DNA-dependent RNA polymerase catalyzes the transcription of DNA into RNA using the four ribonucleoside triphosphates as substrates. This is DNA-directed RNA polymerase subunit beta from Borrelia garinii subsp. bavariensis (strain ATCC BAA-2496 / DSM 23469 / PBi) (Borreliella bavariensis).